Reading from the N-terminus, the 299-residue chain is Trans-aconitate 3-methyltransferase (299 aa).

At serine 2 the chain carries N-acetylserine.

It belongs to the methyltransferase superfamily. Tam family.

The protein resides in the cytoplasm. It carries out the reaction trans-aconitate + S-adenosyl-L-methionine = (E)-2-(methoxycarbonylmethyl)but-2-enedioate + S-adenosyl-L-homocysteine. Catalyzes the S-adenosylmethionine monomethyl esterification of trans-aconitate and 3-isopropylmalate at high affinity and of other molecules like cis-aconitate, isocitrate, and citrate at lower velocities and affinities. The function of trans-aconitate methylation appears to be in reducing the toxicity of this spontaneous breakdown product of cis-aconitate. The role of 3-isopropylmalate methylation is unclear but may represent a metabolic branch at 3-isopropylmalate, where some of the material is taken in the pathway leading to leucine and some is taken in a pathway to the 3-isopropylmalate methyl ester, a molecule that provides a signal to switch from vegetative to invasive growth in response to amino acid starvation. This chain is Trans-aconitate 3-methyltransferase (TMT1), found in Saccharomyces cerevisiae (strain ATCC 204508 / S288c) (Baker's yeast).